The primary structure comprises 58 residues: Small ribosomal subunit protein bS21 (58 aa).

The disordered stretch occupies residues 35–58; the sequence is REHYESPSVRRKKKSEAARKRRYK. Residues 43–58 are compositionally biased toward basic residues; sequence VRRKKKSEAARKRRYK.

This sequence belongs to the bacterial ribosomal protein bS21 family.

This chain is Small ribosomal subunit protein bS21, found in Acetivibrio thermocellus (strain ATCC 27405 / DSM 1237 / JCM 9322 / NBRC 103400 / NCIMB 10682 / NRRL B-4536 / VPI 7372) (Clostridium thermocellum).